The chain runs to 143 residues: Nucleoside diphosphate kinase (143 aa).

ATP is bound by residues lysine 11, phenylalanine 59, arginine 87, threonine 93, arginine 104, and asparagine 114. Histidine 117 functions as the Pros-phosphohistidine intermediate in the catalytic mechanism.

This sequence belongs to the NDK family. As to quaternary structure, homotetramer. Mg(2+) serves as cofactor.

It localises to the cytoplasm. It catalyses the reaction a 2'-deoxyribonucleoside 5'-diphosphate + ATP = a 2'-deoxyribonucleoside 5'-triphosphate + ADP. It carries out the reaction a ribonucleoside 5'-diphosphate + ATP = a ribonucleoside 5'-triphosphate + ADP. Major role in the synthesis of nucleoside triphosphates other than ATP. The ATP gamma phosphate is transferred to the NDP beta phosphate via a ping-pong mechanism, using a phosphorylated active-site intermediate. The sequence is that of Nucleoside diphosphate kinase from Pseudoalteromonas translucida (strain TAC 125).